A 255-amino-acid chain; its full sequence is Dehydrogenase/reductase SDR family member 11 (255 aa).

The signal sequence occupies residues 1 to 25 (MERWRDRLALVTGASGGIGAAVARA). Residues 13-18 (GASGGI), 38-39 (RT), E44, 65-66 (DL), and N92 contribute to the NADP(+) site. Substrate contacts are provided by S146 and Y161. Residues Y161, K165, 196–199 (VETQ), and K203 each bind NADP(+). Y161 functions as the Proton acceptor in the catalytic mechanism.

Belongs to the short-chain dehydrogenases/reductases (SDR) family.

It localises to the secreted. The catalysed reaction is a 3beta-hydroxysteroid + NADP(+) = a 3-oxosteroid + NADPH + H(+). It catalyses the reaction 17beta-estradiol + NAD(+) = estrone + NADH + H(+). It carries out the reaction 17beta-estradiol + NADP(+) = estrone + NADPH + H(+). It functions in the pathway steroid biosynthesis; estrogen biosynthesis. Inhibited by flavonoids including apigenin, luteolin, genistein, kaempferol and quercetin and also by carbenoxolone, zearalenone, glycyrrhetinic, curcumin and flufenamic acid. In terms of biological role, catalyzes the conversion of the 17-keto group of estrone, 4- and 5-androstenes and 5-alpha-androstanes into their 17-beta-hydroxyl metabolites and the conversion of the 3-keto group of 3-, 3,17- and 3,20- diketosteroids into their 3-hydroxyl metabolites. Exhibits reductive 3-beta-hydroxysteroid dehydrogenase activity toward 5-beta-androstanes, 5-beta-pregnanes, 4-pregnenes and bile acids. May also reduce endogenous and exogenous alpha-dicarbonyl compounds and xenobiotic alicyclic ketones. The protein is Dehydrogenase/reductase SDR family member 11 (DHRS11) of Bos taurus (Bovine).